A 163-amino-acid chain; its full sequence is Globin CTT-V (163 aa).

The signal sequence occupies residues 1–16; the sequence is MKFFAVLTLCIIGAIA. In terms of domain architecture, Globin spans 18-163; sequence PLTSDEANLV…YTVAFEVIPA (146 aa). The heme b site is built by His76 and His111.

This sequence belongs to the globin family.

The sequence is that of Globin CTT-V (CTT-V) from Chironomus thummi piger (Midge).